A 493-amino-acid chain; its full sequence is Glutamate--tRNA ligase (493 aa).

A 'HIGH' region motif is present at residues 10 to 20 (PSPTGDPHVGT). Cys-107, Cys-109, Cys-134, and His-136 together coordinate Zn(2+). The short motif at 251–255 (KLSKR) is the 'KMSKS' region element. An ATP-binding site is contributed by Lys-254.

This sequence belongs to the class-I aminoacyl-tRNA synthetase family. Glutamate--tRNA ligase type 1 subfamily. As to quaternary structure, monomer. It depends on Zn(2+) as a cofactor.

The protein localises to the cytoplasm. It carries out the reaction tRNA(Glu) + L-glutamate + ATP = L-glutamyl-tRNA(Glu) + AMP + diphosphate. Catalyzes the attachment of glutamate to tRNA(Glu) in a two-step reaction: glutamate is first activated by ATP to form Glu-AMP and then transferred to the acceptor end of tRNA(Glu). The protein is Glutamate--tRNA ligase of Stutzerimonas stutzeri (strain A1501) (Pseudomonas stutzeri).